The sequence spans 845 residues: uncharacterized protein (845 aa).

Over residues 224-241 (SNNIPTGIQDSSKYTVNG) the composition is skewed to polar residues. 7 disordered regions span residues 224–244 (SNNI…GPTE), 324–346 (QGTE…ANNG), 383–434 (RTAN…EGSA), 456–485 (VKAS…ATLN), 519–619 (NMTL…PKNS), 674–701 (VVSR…DSSP), and 739–785 (RKST…ANKS). The span at 390–399 (PTKKSNRSEQ) shows a compositional bias: basic and acidic residues. A compositionally biased stretch (polar residues) spans 400–422 (SKTVANTNVGSKNGTTPRSFAQK). Residues 534-546 (NSWRSKYLSEGKN) show a composition bias toward basic and acidic residues. Residues 563-576 (SSLASPTKSSASPL) show a composition bias toward low complexity. Position 567 is a phosphoserine (S567). Basic and acidic residues-rich tracts occupy residues 579–588 (APKETPERLC) and 600–614 (ANLK…KSDI). Polar residues-rich tracts occupy residues 674 to 683 (VVSRTVTSPK), 691 to 701 (SKASYNQDSSP), and 743 to 760 (ADSL…TPKA).

Its subcellular location is the mitochondrion. This is an uncharacterized protein from Schizosaccharomyces pombe (strain 972 / ATCC 24843) (Fission yeast).